The primary structure comprises 411 residues: MHSRILLLLLMFAFNVGLINCGQSLVSPQSNCKIRCENGGMCVFDLERPDFHSCICLLGVYTGDRCQIRIAPEDIETTATSDETSHPMNIQHQQSQADIDDARRRDDERKREYERQVAERTRKEKEDRERASDEERRRQQHEQYWKEETARREQQRAEAERRIQEQRVRDDERRRQHEAERSQIEERRREEESRRLAAQRETDEARVRDEERRRQETEKEVEKELNDKRTQSMNEQFEYEGGDEEYPQVAEKEDEYDEGYETDNTEDVTITTTKTTKLMKPMVEESKGVDGDDGSDMIMEKDEMEDDKEPIRKEDEKLIDSIKHVFNKAVDETVKEHPIEEDEYWDETSKKTDEDSWTAENEGTKKTEEADEYGMEEGTEGWMMVKKENENAAVGTTVSLITVTFLFTLIF.

The N-terminal stretch at 1–21 (MHSRILLLLLMFAFNVGLINC) is a signal peptide. One can recognise an EGF-like domain in the interval 28-67 (PQSNCKIRCENGGMCVFDLERPDFHSCICLLGVYTGDRCQ). Intrachain disulfides connect Cys-32–Cys-42, Cys-36–Cys-54, and Cys-56–Cys-66. Polar residues predominate over residues 78 to 97 (TATSDETSHPMNIQHQQSQA). 2 disordered regions span residues 78-312 (TATS…EPIR) and 337-375 (HPIEEDEYWDETSKKTDEDSWTAENEGTKKTEEADEYGM). Positions 100 to 230 (DDARRRDDER…VEKELNDKRT (131 aa)) are enriched in basic and acidic residues. The segment covering 237–266 (FEYEGGDEEYPQVAEKEDEYDEGYETDNTE) has biased composition (acidic residues). Residues 267 to 276 (DVTITTTKTT) show a composition bias toward low complexity.

This is an uncharacterized protein from Caenorhabditis elegans.